Reading from the N-terminus, the 357-residue chain is tRNA pseudouridine synthase D (357 aa).

Asp-76 acts as the Nucleophile in catalysis. The TRUD domain occupies 151 to 331 (GMPNYFGYQR…DGRYKDEEAQ (181 aa)).

It belongs to the pseudouridine synthase TruD family.

The catalysed reaction is uridine(13) in tRNA = pseudouridine(13) in tRNA. In terms of biological role, responsible for synthesis of pseudouridine from uracil-13 in transfer RNAs. The sequence is that of tRNA pseudouridine synthase D from Sulfurimonas denitrificans (strain ATCC 33889 / DSM 1251) (Thiomicrospira denitrificans (strain ATCC 33889 / DSM 1251)).